Reading from the N-terminus, the 111-residue chain is Cystatin (111 aa).

Residues 3-103 (GGLSPRDVTD…CRFEVWSRPW (101 aa)) form the Cystatin domain. The short motif at 47 to 51 (QVVSG) is the Secondary area of contact element. A disulfide bond links cysteine 65 and cysteine 81.

The protein belongs to the cystatin family. Expressed by the venom gland.

Its subcellular location is the secreted. Inhibits various C1 cysteine proteases including cathepsin L, papain and cathepsin B. This protein has no toxic activity and its function in the venom is unknown. It may play a role as housekeeping or regulatory protein. The chain is Cystatin from Bitis arietans (African puff adder).